The chain runs to 498 residues: ATP synthase subunit beta, chloroplastic (498 aa).

Residue Gly172–Thr179 participates in ATP binding.

This sequence belongs to the ATPase alpha/beta chains family. As to quaternary structure, F-type ATPases have 2 components, CF(1) - the catalytic core - and CF(0) - the membrane proton channel. CF(1) has five subunits: alpha(3), beta(3), gamma(1), delta(1), epsilon(1). CF(0) has four main subunits: a(1), b(1), b'(1) and c(9-12).

It localises to the plastid. The protein resides in the chloroplast thylakoid membrane. The catalysed reaction is ATP + H2O + 4 H(+)(in) = ADP + phosphate + 5 H(+)(out). Produces ATP from ADP in the presence of a proton gradient across the membrane. The catalytic sites are hosted primarily by the beta subunits. This is ATP synthase subunit beta, chloroplastic from Oenothera biennis (German evening primrose).